Here is a 61-residue protein sequence, read N- to C-terminus: Photosystem II reaction center protein K (61 aa).

A propeptide spanning residues 1–24 is cleaved from the precursor; the sequence is MPNILSLTCICFNSVLYPTSFFFA. Residues 32–52 traverse the membrane as a helical segment; sequence IFNPIVDIMPVIPLFFFLLAF.

Belongs to the PsbK family. PSII is composed of 1 copy each of membrane proteins PsbA, PsbB, PsbC, PsbD, PsbE, PsbF, PsbH, PsbI, PsbJ, PsbK, PsbL, PsbM, PsbT, PsbX, PsbY, PsbZ, Psb30/Ycf12, at least 3 peripheral proteins of the oxygen-evolving complex and a large number of cofactors. It forms dimeric complexes. Detected in both etioplasts and green leaves; PSII is only assembled in green leaves.

The protein resides in the plastid. It localises to the chloroplast thylakoid membrane. One of the components of the core complex of photosystem II (PSII). PSII is a light-driven water:plastoquinone oxidoreductase that uses light energy to abstract electrons from H(2)O, generating O(2) and a proton gradient subsequently used for ATP formation. It consists of a core antenna complex that captures photons, and an electron transfer chain that converts photonic excitation into a charge separation. The protein is Photosystem II reaction center protein K of Hordeum vulgare (Barley).